The sequence spans 204 residues: Protein Mis18-alpha (204 aa).

A phosphoserine mark is found at Ser13, Ser16, and Ser17. Residues 51-149 (PLVFLCARCR…SVEAVESYTL (99 aa)) form the Mis18 domain. Cys56, Cys59, Cys112, and Cys115 together coordinate Zn(2+). Lys133 is covalently cross-linked (Glycyl lysine isopeptide (Lys-Gly) (interchain with G-Cter in SUMO2)). At Ser204 the chain carries Phosphoserine.

The protein belongs to the mis18 family. In terms of assembly, homodimer, and heterodimer with OIP5/MIS18B. Identified in a complex containing MIS18A, OIP5/MIS18B, MIS18BP1, RBBP7 and RBBP4.

The protein resides in the nucleus. Its subcellular location is the chromosome. It is found in the centromere. In terms of biological role, required for recruitment of CENPA to centromeres and normal chromosome segregation during mitosis. This chain is Protein Mis18-alpha (Mis18a), found in Mus musculus (Mouse).